Consider the following 530-residue polypeptide: Ubiquitin carboxyl-terminal hydrolase 17-like protein 12 (530 aa).

A USP domain is found at 80–375 (AGLQNMGNTC…QAYVLFYIQK (296 aa)). The Nucleophile role is filled by Cys-89. His-334 functions as the Proton acceptor in the catalytic mechanism. Basic and acidic residues-rich tracts occupy residues 382 to 392 (SESVSRGREPR) and 398 to 412 (DTDR…KRDH). 2 disordered regions span residues 382–412 (SESV…KRDH) and 477–530 (NHHP…LVCQ). The span at 484-495 (SSLLKLSSTTPT) shows a compositional bias: low complexity. Over residues 496-505 (HQESMNTGTL) the composition is skewed to polar residues. Over residues 510-524 (GRARRSKGKNKHSKR) the composition is skewed to basic residues.

The protein belongs to the peptidase C19 family. USP17 subfamily.

It is found in the nucleus. The protein localises to the endoplasmic reticulum. It carries out the reaction Thiol-dependent hydrolysis of ester, thioester, amide, peptide and isopeptide bonds formed by the C-terminal Gly of ubiquitin (a 76-residue protein attached to proteins as an intracellular targeting signal).. Functionally, deubiquitinating enzyme that removes conjugated ubiquitin from specific proteins to regulate different cellular processes that may include cell proliferation, progression through the cell cycle, apoptosis, cell migration, and the cellular response to viral infection. This Homo sapiens (Human) protein is Ubiquitin carboxyl-terminal hydrolase 17-like protein 12 (USP17L12).